The sequence spans 283 residues: Bifunctional protein FolD 1 (283 aa).

Residues 166–168 (GRS) and isoleucine 232 contribute to the NADP(+) site.

It belongs to the tetrahydrofolate dehydrogenase/cyclohydrolase family. As to quaternary structure, homodimer.

The enzyme catalyses (6R)-5,10-methylene-5,6,7,8-tetrahydrofolate + NADP(+) = (6R)-5,10-methenyltetrahydrofolate + NADPH. The catalysed reaction is (6R)-5,10-methenyltetrahydrofolate + H2O = (6R)-10-formyltetrahydrofolate + H(+). The protein operates within one-carbon metabolism; tetrahydrofolate interconversion. Its function is as follows. Catalyzes the oxidation of 5,10-methylenetetrahydrofolate to 5,10-methenyltetrahydrofolate and then the hydrolysis of 5,10-methenyltetrahydrofolate to 10-formyltetrahydrofolate. The protein is Bifunctional protein FolD 1 of Lactobacillus johnsonii (strain CNCM I-12250 / La1 / NCC 533).